Here is a 75-residue protein sequence, read N- to C-terminus: Dermaseptin-SP4 (75 aa).

The N-terminal stretch at 1–22 is a signal peptide; it reads MAFLKKSLFLVLFLGLVSLSMC. Positions 23 to 45 are excised as a propeptide; that stretch reads EEEKRENEVEEEQEDDEQSELRR. Residue Pro72 is modified to Proline amide. Residues 74-75 constitute a propeptide that is removed on maturation; sequence EQ.

Belongs to the frog skin active peptide (FSAP) family. Dermaseptin subfamily. Expressed by the skin glands.

It localises to the secreted. It is found in the target cell membrane. Its function is as follows. Antimicrobial peptide with activity against Gram-positive and Gram-negative bacteria and fungi. Has been tested against E.coli (MIC=47.25-128 uM), S.aureus (MIC=189-512 uM), K.pneumoniae (MIC=189 uM) and C.albicans (MIC&gt;189 uM). Probably acts by disturbing membrane functions with its alpha-helical amphipathic structure. May penetrate bacterial membranes, but stay at the mammalian membrane surface. Shows a weak hemolytic activity. This chain is Dermaseptin-SP4, found in Agalychnis spurrelli (Gliding leaf frog).